The sequence spans 366 residues: tRNA/tmRNA (uracil-C(5))-methyltransferase (366 aa).

S-adenosyl-L-methionine contacts are provided by Gln190, Tyr218, Asn223, Glu239, and Asp299. Residue Cys324 is the Nucleophile of the active site. Glu358 functions as the Proton acceptor in the catalytic mechanism.

It belongs to the class I-like SAM-binding methyltransferase superfamily. RNA M5U methyltransferase family. TrmA subfamily.

It carries out the reaction uridine(54) in tRNA + S-adenosyl-L-methionine = 5-methyluridine(54) in tRNA + S-adenosyl-L-homocysteine + H(+). The enzyme catalyses uridine(341) in tmRNA + S-adenosyl-L-methionine = 5-methyluridine(341) in tmRNA + S-adenosyl-L-homocysteine + H(+). In terms of biological role, dual-specificity methyltransferase that catalyzes the formation of 5-methyluridine at position 54 (m5U54) in all tRNAs, and that of position 341 (m5U341) in tmRNA (transfer-mRNA). This Escherichia coli O157:H7 protein is tRNA/tmRNA (uracil-C(5))-methyltransferase.